The chain runs to 713 residues: MMDNSTESVEDAVSLPDFDNPSFYVNRELSWMAFNQRVLEEALSRDEHPLLERIKFISIFSSNLDEFFMIRVAGLEDQYEAGVQDRSIDGMTPAEQLEKIREGVTAQFIQRDACFYGDICPELARHGIEFVDYRSFSESNKEVLQQYFRHEIFPVLTPLAFDTGHPFPFVSNLSLNLAIELEDLEHQSMKFARVKVPSILPRILRLDLIDGLDFGDDRIRLLWLDDFISHHLEQLFPLMRIVQAYPFRVIRDADIEIEEDEAGDLLETIEQGIRSRRYGKVVRLDVTPDMPESIRLLLIKHLEVSSRNVYEIPGALGLSSLMELMRIDKPELKDEPFAPSNPIEEKAGGDIFSAIRQSDHLFYHPYDSFQPVVDLINQAARDPQVLSIKQTLYRVGSNSPIVQALMHAVEEGKQVAVLVELKARFDEENNIVWARALENVGAHVVYGLVGLKTHAKLTMIVRREHDKLKRYLHLGTGNYNPATAKIYTDYSFLTANEILSEDVSELFNALTGYSRHTAYRKLIVSPLNTRKRIIAMIEREIEWHKKEGNGRIVMKMNALVDRKTIKALYLASAAGVQVDLIVRGICCLVPGIEGVSHNIRVISVIGRFLEHSRAYYFRNGGMDELFLGSADIMPRNLDHRVEVLFPVLDSELINVVKSELELILSDNVKAWQMNADGTYSKVVDQRPAVNSQSVFLQQASMKKSISKFKVNGL.

An ATP-binding site is contributed by Asn63. 2 residues coordinate Mg(2+): Arg394 and Arg424. The active-site Phosphohistidine intermediate is the His454. Positions 487, 583, and 611 each coordinate ATP.

The protein belongs to the polyphosphate kinase 1 (PPK1) family. It depends on Mg(2+) as a cofactor. In terms of processing, an intermediate of this reaction is the autophosphorylated ppk in which a phosphate is covalently linked to a histidine residue through a N-P bond.

The enzyme catalyses [phosphate](n) + ATP = [phosphate](n+1) + ADP. Its function is as follows. Catalyzes the reversible transfer of the terminal phosphate of ATP to form a long-chain polyphosphate (polyP). The protein is Polyphosphate kinase of Prosthecochloris aestuarii (strain DSM 271 / SK 413).